Consider the following 224-residue polypeptide: Small ribosomal subunit protein uS2 (224 aa).

Over residues 1–14 the composition is skewed to basic and acidic residues; it reads MAEAKPAPEKEAAV. Residues 1-32 are disordered; it reads MAEAKPAPEKEAAVKTESVPVADDEAASAKEG.

It belongs to the universal ribosomal protein uS2 family.

The polypeptide is Small ribosomal subunit protein uS2 (Methanosarcina mazei (strain ATCC BAA-159 / DSM 3647 / Goe1 / Go1 / JCM 11833 / OCM 88) (Methanosarcina frisia)).